Reading from the N-terminus, the 530-residue chain is Autoinducer-2 kinase (530 aa).

Belongs to the FGGY kinase family.

It localises to the cytoplasm. The enzyme catalyses (S)-4,5-dihydroxypentane-2,3-dione + ATP = (2S)-2-hydroxy-3,4-dioxopentyl phosphate + ADP + H(+). Catalyzes the phosphorylation of autoinducer-2 (AI-2) to phospho-AI-2, which subsequently inactivates the transcriptional regulator LsrR and leads to the transcription of the lsr operon. Phosphorylates the ring-open form of (S)-4,5-dihydroxypentane-2,3-dione (DPD), which is the precursor to all AI-2 signaling molecules, at the C5 position. The sequence is that of Autoinducer-2 kinase from Salmonella choleraesuis (strain SC-B67).